A 544-amino-acid chain; its full sequence is O-phosphoserine--tRNA(Cys) ligase (544 aa).

Substrate-binding positions include histidine 194–threonine 196, serine 239–serine 241, tyrosine 281–tyrosine 282, and asparagine 335.

Belongs to the class-II aminoacyl-tRNA synthetase family. O-phosphoseryl-tRNA(Cys) synthetase subfamily. Homotetramer. Interacts with SepCysS.

It carries out the reaction tRNA(Cys) + O-phospho-L-serine + ATP = O-phospho-L-seryl-tRNA(Cys) + AMP + diphosphate. Functionally, catalyzes the attachment of O-phosphoserine (Sep) to tRNA(Cys). The chain is O-phosphoserine--tRNA(Cys) ligase from Methanopyrus kandleri (strain AV19 / DSM 6324 / JCM 9639 / NBRC 100938).